Reading from the N-terminus, the 852-residue chain is RNA-binding protein 10 (852 aa).

Basic and acidic residues-rich tracts occupy residues 1–14 and 21–45; these read MEYERRGGRGDRTG and RSQDDGGENRSRDHDYRDMDYRSYP. The segment at 1-78 is disordered; the sequence is MEYERRGGRG…RGQLQSHGVQ (78 aa). Residues 37 to 132 enclose the RRM 1 domain; that stretch reads RDMDYRSYPR…QKVSMHYSDP (96 aa). Ser61 is modified (phosphoserine). A RanBP2-type zinc finger spans residues 135 to 165; it reads KINEDWLCNKCGVQNFKRREKCFKCGVPKSE. The RRM 2 domain maps to 223 to 307; the sequence is DTIILRNLNP…KTINVEFAKG (85 aa). At Lys306 the chain carries N6-acetyllysine. Disordered stretches follow at residues 343 to 365, 386 to 410, 426 to 446, 459 to 489, 542 to 568, and 634 to 675; these read GGESTWAAPEEPPVDYSYYQQDE, KGPGMTGTKGDTSGAGPETSLEGGT, APGLYQQSAEGSSGQGTATNS, SELQSPTHPSSALPPATSPTAPESYSQYPVP, EQSADGHKDTGASSKEGKEKKEKHKTK, and DLPK…EEKL. The segment covering 430-446 has biased composition (polar residues); the sequence is YQQSAEGSSGQGTATNS. Residues 463-484 show a composition bias toward low complexity; that stretch reads SPTHPSSALPPATSPTAPESYS. A compositionally biased stretch (basic and acidic residues) spans 545–561; the sequence is ADGHKDTGASSKEGKEK. Phosphoserine occurs at positions 640, 645, 655, 658, and 660. Residues 665-675 are compositionally biased toward basic and acidic residues; the sequence is ERGGPEREEKL. The C2H2-type; atypical zinc-finger motif lies at 681–706; it reads LACLLCRRQFPSKEALIRHQQLSGLH. A phosphoserine mark is found at Ser703, Ser719, and Ser767. The tract at residues 740-783 is disordered; the sequence is AAERREKYGIPEPPEPKRRKYGGISTASVDFEQPTRDGLGSDNI. The region spanning 780–826 is the G-patch domain; the sequence is SDNIGSRMLQAMGWKEGSGLGRKKQGIVTPIEAQTRVRGSGLGARGS. Arg824 is subject to Omega-N-methylarginine.

In terms of assembly, associates with the spliceosome. Component of a large chromatin remodeling complex, at least composed of MYSM1, PCAF, RBM10 and KIF11/TRIP5.

Its subcellular location is the nucleus. Functionally, binds to ssRNA containing the consensus sequence 5'-AGGUAA-3'. May be involved in post-transcriptional processing, most probably in mRNA splicing. Binds to RNA homopolymers, with a preference for poly(G) and poly(U) and little for poly(A). May bind to specific miRNA hairpins. The protein is RNA-binding protein 10 of Rattus norvegicus (Rat).